Here is a 500-residue protein sequence, read N- to C-terminus: MSIVDVRTPDPKRFIPGATGDWEVIIGMEVHAQVLSNSKLFSSASTEFGSEPNANVSLVDAAMPGMLPVINEECVKQAVRTGLGLKAKINNRSIFDRKNYFYPDLPQGYQISQYKDPIVGEGKIIISVGPDRQGQFEDVEIGIERLHLEQDAGKSMHDQHPAMSYVDLNRSGVALMEIVSKPDLRSSDEAKAYLTKLRSILRYLGTCDGNMDEGSMRADVNVSVRRPGEAFGTRCEIKNVNSIRFVGQSIEYEARRQIAILEDGGAIDQETRLFDANKGETRSMRSKEEAHDYRYFPDPDLLPLEFDDAFVEALKADLPELPDDKKERFVRDLGLSVYDASVLVSEKAIADYFEAVAEGRDGKAAANWVINDLLGALNKAGKTIEETPVSPAQLGGIIDLIKDGTISGKLAKDVFEILWNEGGDPAEIVESRGMKQVTDTGAIEKAVDEIIAANPDQVEKAKAKPSLAGWFVGQVMKATGGKANPQAVQALVKSKLGIEE.

It belongs to the GatB/GatE family. GatB subfamily. As to quaternary structure, heterotrimer of A, B and C subunits.

The enzyme catalyses L-glutamyl-tRNA(Gln) + L-glutamine + ATP + H2O = L-glutaminyl-tRNA(Gln) + L-glutamate + ADP + phosphate + H(+). It catalyses the reaction L-aspartyl-tRNA(Asn) + L-glutamine + ATP + H2O = L-asparaginyl-tRNA(Asn) + L-glutamate + ADP + phosphate + 2 H(+). Functionally, allows the formation of correctly charged Asn-tRNA(Asn) or Gln-tRNA(Gln) through the transamidation of misacylated Asp-tRNA(Asn) or Glu-tRNA(Gln) in organisms which lack either or both of asparaginyl-tRNA or glutaminyl-tRNA synthetases. The reaction takes place in the presence of glutamine and ATP through an activated phospho-Asp-tRNA(Asn) or phospho-Glu-tRNA(Gln). The chain is Aspartyl/glutamyl-tRNA(Asn/Gln) amidotransferase subunit B from Rhizobium meliloti (strain 1021) (Ensifer meliloti).